Consider the following 1137-residue polypeptide: Calcium-activated potassium channel subunit alpha-1 (1137 aa).

The Extracellular segment spans residues 1–44 (MSNNINANNLNTDSSSSPVNVPKMDALIIPVTMEVPCDSRGQRM). Residues 45–65 (WWAFLASSMVTFFGGLFIILL) traverse the membrane as a helical segment. The Cytoplasmic portion of the chain corresponds to 66–137 (WRTLKYLWTV…MISAQTLTGR (72 aa)). Residues 138-158 (VLVVLVFALSIGALVIYFIDS) form a helical membrane-spanning segment. Over 159-173 (SNPIESCQNFYKDFT) the chain is Extracellular. The chain crosses the membrane as a helical span at residues 174–194 (LQIDMAFNVFFLLYFGLRFIA). Residues 195–198 (ANDK) are Cytoplasmic-facing. Residues 199–219 (LWFWLEVNSVVDFFTVPPVFV) form a helical membrane-spanning segment. Residues 220–223 (SVYL) are Extracellular-facing. Residues 224–244 (NRSWLGLRFLRALRLIQFSEI) form a helical; Voltage-sensor membrane-spanning segment. The Cytoplasmic portion of the chain corresponds to 245 to 259 (LQFLNILKTSNSIKL). The chain crosses the membrane as a helical span at residues 260-280 (VNLCSIFISTWLTAAGFIHLV). Topologically, residues 281 to 294 (ENSGDPWENFQNNQ) are extracellular. The segment at residues 295-317 (QLTYWECVYLLMVTMSTVGYGDV) is an intramembrane region (pore-forming). The short motif at 311–314 (TVGY) is the Selectivity for potassium element. Residues 318–326 (YAKTTLGRL) lie on the Extracellular side of the membrane. A helical membrane pass occupies residues 327–347 (FMVFFILGGLAMFASYVPEII). The Cytoplasmic portion of the chain corresponds to 348-1137 (ELIGNRKKYG…KQKYVQEDRL (790 aa)). The 143-residue stretch at 366-508 (RKHIVVCGHI…WNWKEGDDAI (143 aa)) folds into the RCK N-terminal 1 domain. Mg(2+) contacts are provided by E398, Q421, and E423. Positions 515-535 (LGFIAQSCLAPGLSTMLANLF) are segment S7. The segment at 572–592 (LSFPAVCELVFAKLKLLMIAI) is segment S8. Residues 636–640 (CKACH) are heme-binding motif. The interval 660–688 (EQPSTLSPKKKQRNGGMRNSPNSSPKLMR) is disordered. The segment S9 stretch occupies residues 738–758 (VLSGHVVVCIFGDVKSALIGL). Residues 740–884 (SGHVVVCIFG…MDRSSPDNSP (145 aa)) form the RCK N-terminal 2 domain. The short motif at 904–926 (TELVNDSNVQFLDQDDDDDPDTE) is the Calcium bowl element. Ca(2+)-binding residues include Q913, D916, D919, and D921. The interval 933–953 (FACGTAFAVSVLDSLMSATYF) is segment S10. The segment covering 1088-1112 (ASLSHSSHSSYSSSKKSSSVHSIPS) has biased composition (low complexity). Positions 1088-1137 (ASLSHSSHSSYSSSKKSSSVHSIPSTANRPNRTKTRDSREKQKYVQEDRL) are disordered. A compositionally biased stretch (basic and acidic residues) spans 1121–1137 (KTRDSREKQKYVQEDRL).

It belongs to the potassium channel family. Calcium-activated (TC 1.A.1.3) subfamily. KCa1.1/KCNMA1 sub-subfamily. In terms of assembly, homotetramer; which constitutes the calcium-activated potassium channel.

The protein resides in the cell membrane. The enzyme catalyses K(+)(in) = K(+)(out). With respect to regulation, ethanol and carbon monoxide-bound heme increase channel activation. Heme inhibits channel activation. In terms of biological role, potassium channel activated by both membrane depolarization or increase in cytosolic Ca(2+) that mediates export of K(+). It is also activated by the concentration of cytosolic Mg(2+). Its activation dampens the excitatory events that elevate the cytosolic Ca(2+) concentration and/or depolarize the cell membrane. It therefore contributes to repolarization of the membrane potential. Plays a key role in controlling excitability in a number of systems, such as regulation of the contraction of smooth muscle, the tuning of hair cells in the cochlea, regulation of transmitter release, and innate immunity. In smooth muscles, its activation by high level of Ca(2+), caused by ryanodine receptors in the sarcoplasmic reticulum, regulates the membrane potential. In cochlea cells, its number and kinetic properties partly determine the characteristic frequency of each hair cell and thereby helps to establish a tonotopic map. Highly sensitive to both iberiotoxin (IbTx) and charybdotoxin (CTX). The chain is Calcium-activated potassium channel subunit alpha-1 (KCNMA1) from Gallus gallus (Chicken).